Consider the following 153-residue polypeptide: Protein Smg homolog (153 aa).

Belongs to the Smg family.

The protein is Protein Smg homolog of Neisseria meningitidis serogroup B (strain ATCC BAA-335 / MC58).